The chain runs to 603 residues: Elongation factor 4 (603 aa).

One can recognise a tr-type G domain in the interval 7-191; that stretch reads DNIRNFSIVA…AIVTRLPPPK (185 aa). GTP contacts are provided by residues 19 to 24 and 138 to 141; these read DHGKST and NKVD.

This sequence belongs to the TRAFAC class translation factor GTPase superfamily. Classic translation factor GTPase family. LepA subfamily.

It is found in the cell inner membrane. The catalysed reaction is GTP + H2O = GDP + phosphate + H(+). Its function is as follows. Required for accurate and efficient protein synthesis under certain stress conditions. May act as a fidelity factor of the translation reaction, by catalyzing a one-codon backward translocation of tRNAs on improperly translocated ribosomes. Back-translocation proceeds from a post-translocation (POST) complex to a pre-translocation (PRE) complex, thus giving elongation factor G a second chance to translocate the tRNAs correctly. Binds to ribosomes in a GTP-dependent manner. This chain is Elongation factor 4, found in Rhodopseudomonas palustris (strain BisA53).